We begin with the raw amino-acid sequence, 215 residues long: Protein-L-isoaspartate O-methyltransferase (215 aa).

Ser62 is a catalytic residue.

The protein belongs to the methyltransferase superfamily. L-isoaspartyl/D-aspartyl protein methyltransferase family.

It localises to the cytoplasm. It catalyses the reaction [protein]-L-isoaspartate + S-adenosyl-L-methionine = [protein]-L-isoaspartate alpha-methyl ester + S-adenosyl-L-homocysteine. Its function is as follows. Catalyzes the methyl esterification of L-isoaspartyl residues in peptides and proteins that result from spontaneous decomposition of normal L-aspartyl and L-asparaginyl residues. It plays a role in the repair and/or degradation of damaged proteins. The chain is Protein-L-isoaspartate O-methyltransferase from Bradyrhizobium sp. (strain ORS 278).